Reading from the N-terminus, the 92-residue chain is Small ribosomal subunit protein uS19c (92 aa).

Belongs to the universal ribosomal protein uS19 family.

It localises to the plastid. Its subcellular location is the chloroplast. Functionally, protein S19 forms a complex with S13 that binds strongly to the 16S ribosomal RNA. The polypeptide is Small ribosomal subunit protein uS19c (Ostreococcus tauri).